Consider the following 64-residue polypeptide: Metallothionein (64 aa).

Belongs to the metallothionein superfamily. Type 4 family.

Functionally, metallothioneins have a high content of cysteine residues that bind various heavy metals. This chain is Metallothionein, found in Sterechinus neumayeri (Antarctic sea urchin).